Consider the following 269-residue polypeptide: MPELPEVETSRRGIEPHLVGATILHAHIRNGRLRWPVSDEIYRLSDTPVLSVQRRAKYLLLELPDGWIIIHLGMSGSLRILSEALPAEKHDHVDLVMSNGKILRYTDPRRFGAWLWTKELEGHNVLAHLGPEPLSDEFNGEYLRQKCAKKKTAIKPWLMDNKLVVGVGNIYASESLFAAGIHPDRLASSLSTEECDLLARVIKAVLLRSIEQGGTTLKDFLQSDGKPGYFAQELQVYGRKGEPCRVCGTPIVATKHAQRATFYCRHCQK.

Residue Pro2 is the Schiff-base intermediate with DNA of the active site. Glu3 functions as the Proton donor in the catalytic mechanism. The active-site Proton donor; for beta-elimination activity is the Lys57. Residues His90, Arg109, and Lys150 each contribute to the DNA site. An FPG-type zinc finger spans residues 235–269; sequence QVYGRKGEPCRVCGTPIVATKHAQRATFYCRHCQK. Residue Arg259 is the Proton donor; for delta-elimination activity of the active site.

The protein belongs to the FPG family. Monomer. The cofactor is Zn(2+).

It catalyses the reaction Hydrolysis of DNA containing ring-opened 7-methylguanine residues, releasing 2,6-diamino-4-hydroxy-5-(N-methyl)formamidopyrimidine.. The enzyme catalyses 2'-deoxyribonucleotide-(2'-deoxyribose 5'-phosphate)-2'-deoxyribonucleotide-DNA = a 3'-end 2'-deoxyribonucleotide-(2,3-dehydro-2,3-deoxyribose 5'-phosphate)-DNA + a 5'-end 5'-phospho-2'-deoxyribonucleoside-DNA + H(+). Involved in base excision repair of DNA damaged by oxidation or by mutagenic agents. Acts as a DNA glycosylase that recognizes and removes damaged bases. Has a preference for oxidized purines, such as 7,8-dihydro-8-oxoguanine (8-oxoG). Has AP (apurinic/apyrimidinic) lyase activity and introduces nicks in the DNA strand. Cleaves the DNA backbone by beta-delta elimination to generate a single-strand break at the site of the removed base with both 3'- and 5'-phosphates. This Salmonella agona (strain SL483) protein is Formamidopyrimidine-DNA glycosylase.